Consider the following 754-residue polypeptide: ToMV susceptible protein tm-1(GCR26) (754 aa).

The N-terminal inhibitory domain NN stretch occupies residues 1–201 (MATAQSNSPR…AGMVIGRLES (201 aa)). ATP contacts are provided by residues 18–20 (DTK), threonine 55, arginine 92, and 124–127 (GSGG). The interval 211 to 431 (KFTVGVTMFG…VDSFLEMSPK (221 aa)) is N-terminal inhibitory domain NC.

This sequence belongs to the UPF0261 family. In terms of assembly, homodimer. As to quaternary structure, (Microbial infection) Binds, via an ATP bridge, to the tobamoviruses avirulent (Avr) replication proteins (large and small subunits, e.g. tobacco mild green mosaic virus (TMGMV) AC P18339 and pepper mild mottle virus (PMMoV) AC P89657) to inhibit their function after the translation of tobamoviruses RNA, but before the viral replication complex formation on the membrane surfaces; this interaction is not possible with resistance-breaking strains replication proteins.

Its function is as follows. Inhibitor of viral RNA replication which confers resistance to some tobamoviruses including tobacco mild green mosaic virus (TMGMV) and pepper mild mottle virus (PMMoV), but not to tomato mosaic virus (ToMV strains L, ToMV0 and ToMV1-2) and tobacco mosaic virus (TMV). Prevents tobamoviruses RNA replication by affecting the association of tobamoviruses replication proteins (large and small subunits) with host membrane-associated proteins (e.g. TOM1, TOM2A and ARL8), thus inhibiting the replication complex formation on the membranes and avoiding viral negative-strand RNA synthesis. The polypeptide is ToMV susceptible protein tm-1(GCR26) (Solanum lycopersicum (Tomato)).